The following is a 482-amino-acid chain: MPRFIDRVVVHARAGNGGNGCASVHREKFKPLGGPDGGNGGRGGSVVFVVDPQVHTLLDFHFHPHVVAPSGKQGAGSNRDGAAGADLEVKVPDGTVVLDERGQILADLIGAGTRFEAAAGGRGGLGNAALASRARKAPGFALLGEQGEVRELTLELKTVADVGLVGFPSAGKSSLVSTISAAKPKIADYPFTTLAPNLGVVSAGEHTFTVADVPGLIPGASEGRGLGLDFLRHIERCAVLVHVVDCATLEPGRDPISDIEALEAEIAAYTPTLQGDSTLGDLAERPRAVVLNKIDVPEARELADFVREDVETRFGWPVFEISTVAREGLRPLIFALWDMVAAYRAAQPAAVPRRPVIRPIPVDETAFSVVPDGQGGFVVKGTRPQRWVAQTNFDNDEAVGYLGDRLARLGVEDELLKLGARPGCAVTIGDMTFDWEPQTPAGVDVHLSGRGTDVRLEQTDRVGADERKAARKARRQSDDGEE.

Residues 2–159 (PRFIDRVVVH…RELTLELKTV (158 aa)) form the Obg domain. In terms of domain architecture, OBG-type G spans 160-341 (ADVGLVGFPS…LIFALWDMVA (182 aa)). GTP-binding positions include 166 to 173 (GFPSAGKS), 191 to 195 (FTTLA), 212 to 215 (DVPG), 292 to 295 (NKID), and 322 to 324 (STV). The Mg(2+) site is built by Ser173 and Thr193. The OCT domain occupies 359-437 (PIPVDETAFS…IGDMTFDWEP (79 aa)). The segment at 450–482 (RGTDVRLEQTDRVGADERKAARKARRQSDDGEE) is disordered. Residues 452 to 468 (TDVRLEQTDRVGADERK) are compositionally biased toward basic and acidic residues.

Belongs to the TRAFAC class OBG-HflX-like GTPase superfamily. OBG GTPase family. Monomer. Requires Mg(2+) as cofactor.

Its subcellular location is the cytoplasm. Functionally, an essential GTPase which binds GTP, GDP and possibly (p)ppGpp with moderate affinity, with high nucleotide exchange rates and a fairly low GTP hydrolysis rate. Plays a role in control of the cell cycle, stress response, ribosome biogenesis and in those bacteria that undergo differentiation, in morphogenesis control. The protein is GTPase Obg of Mycolicibacterium gilvum (strain PYR-GCK) (Mycobacterium gilvum (strain PYR-GCK)).